We begin with the raw amino-acid sequence, 301 residues long: Homoserine kinase (301 aa).

Residue 89 to 99 (KPGSGLGSSSA) participates in ATP binding.

This sequence belongs to the GHMP kinase family. Homoserine kinase subfamily.

It is found in the cytoplasm. It carries out the reaction L-homoserine + ATP = O-phospho-L-homoserine + ADP + H(+). It functions in the pathway amino-acid biosynthesis; L-threonine biosynthesis; L-threonine from L-aspartate: step 4/5. In terms of biological role, catalyzes the ATP-dependent phosphorylation of L-homoserine to L-homoserine phosphate. In Methanococcus maripaludis (strain C5 / ATCC BAA-1333), this protein is Homoserine kinase.